Here is a 412-residue protein sequence, read N- to C-terminus: Argininosuccinate synthase (412 aa).

Residues 16–24 (AYSGGLDTS) and alanine 44 each bind ATP. Residues tyrosine 96 and serine 101 each contribute to the L-citrulline site. Residue glycine 126 participates in ATP binding. The L-aspartate site is built by threonine 128, asparagine 132, and aspartate 133. Asparagine 132 contributes to the L-citrulline binding site. Residues arginine 136, serine 185, serine 194, glutamate 270, and tyrosine 282 each coordinate L-citrulline.

This sequence belongs to the argininosuccinate synthase family. Type 1 subfamily. In terms of assembly, homotetramer.

The protein resides in the cytoplasm. It carries out the reaction L-citrulline + L-aspartate + ATP = 2-(N(omega)-L-arginino)succinate + AMP + diphosphate + H(+). Its pathway is amino-acid biosynthesis; L-arginine biosynthesis; L-arginine from L-ornithine and carbamoyl phosphate: step 2/3. In Shewanella baltica (strain OS195), this protein is Argininosuccinate synthase.